Here is a 106-residue protein sequence, read N- to C-terminus: Large ribosomal subunit protein uL24 (106 aa).

It belongs to the universal ribosomal protein uL24 family. Part of the 50S ribosomal subunit.

Its function is as follows. One of two assembly initiator proteins, it binds directly to the 5'-end of the 23S rRNA, where it nucleates assembly of the 50S subunit. Functionally, one of the proteins that surrounds the polypeptide exit tunnel on the outside of the subunit. This chain is Large ribosomal subunit protein uL24, found in Bordetella bronchiseptica (strain ATCC BAA-588 / NCTC 13252 / RB50) (Alcaligenes bronchisepticus).